The primary structure comprises 355 residues: UDP-N-acetylglucosamine--N-acetylmuramyl-(pentapeptide) pyrophosphoryl-undecaprenol N-acetylglucosamine transferase (355 aa).

Residues arginine 166, serine 196, and glutamine 290 each contribute to the UDP-N-acetyl-alpha-D-glucosamine site.

This sequence belongs to the glycosyltransferase 28 family. MurG subfamily.

Its subcellular location is the cell membrane. It carries out the reaction Mur2Ac(oyl-L-Ala-gamma-D-Glu-L-Lys-D-Ala-D-Ala)-di-trans,octa-cis-undecaprenyl diphosphate + UDP-N-acetyl-alpha-D-glucosamine = beta-D-GlcNAc-(1-&gt;4)-Mur2Ac(oyl-L-Ala-gamma-D-Glu-L-Lys-D-Ala-D-Ala)-di-trans,octa-cis-undecaprenyl diphosphate + UDP + H(+). The protein operates within cell wall biogenesis; peptidoglycan biosynthesis. Cell wall formation. Catalyzes the transfer of a GlcNAc subunit on undecaprenyl-pyrophosphoryl-MurNAc-pentapeptide (lipid intermediate I) to form undecaprenyl-pyrophosphoryl-MurNAc-(pentapeptide)GlcNAc (lipid intermediate II). The sequence is that of UDP-N-acetylglucosamine--N-acetylmuramyl-(pentapeptide) pyrophosphoryl-undecaprenol N-acetylglucosamine transferase from Staphylococcus haemolyticus (strain JCSC1435).